A 100-amino-acid chain; its full sequence is Urease subunit gamma (100 aa).

This sequence belongs to the urease gamma subunit family. In terms of assembly, heterotrimer of UreA (gamma), UreB (beta) and UreC (alpha) subunits. Three heterotrimers associate to form the active enzyme.

The protein resides in the cytoplasm. The catalysed reaction is urea + 2 H2O + H(+) = hydrogencarbonate + 2 NH4(+). It participates in nitrogen metabolism; urea degradation; CO(2) and NH(3) from urea (urease route): step 1/1. In Citrobacter koseri (strain ATCC BAA-895 / CDC 4225-83 / SGSC4696), this protein is Urease subunit gamma.